A 98-amino-acid chain; its full sequence is NADH-ubiquinone oxidoreductase chain 4L (98 aa).

Helical transmembrane passes span methionine 1–phenylalanine 21, leucine 26–threonine 46, and isoleucine 58–leucine 78.

The protein belongs to the complex I subunit 4L family.

Its subcellular location is the mitochondrion membrane. It carries out the reaction a ubiquinone + NADH + 5 H(+)(in) = a ubiquinol + NAD(+) + 4 H(+)(out). Its function is as follows. Core subunit of the mitochondrial membrane respiratory chain NADH dehydrogenase (Complex I) which catalyzes electron transfer from NADH through the respiratory chain, using ubiquinone as an electron acceptor. Part of the enzyme membrane arm which is embedded in the lipid bilayer and involved in proton translocation. The sequence is that of NADH-ubiquinone oxidoreductase chain 4L (MT-ND4L) from Scyliorhinus canicula (Small-spotted catshark).